The primary structure comprises 186 residues: Large ribosomal subunit protein bL12c (186 aa).

Residues M1–R11 are compositionally biased toward polar residues. The interval M1–S24 is disordered. A chloroplast-targeting transit peptide spans M1–A53. Over residues S12–S24 the composition is skewed to low complexity.

Belongs to the bacterial ribosomal protein bL12 family.

Its subcellular location is the plastid. It is found in the chloroplast. The protein is Large ribosomal subunit protein bL12c of Nicotiana sylvestris (Wood tobacco).